The primary structure comprises 477 residues: Transmembrane and coiled-coil domain protein 3 (477 aa).

Ser46 is modified (phosphoserine). Positions 112–153 (KQVFEKKNQKSAHSIAQLQKKLEQYHRKLREIEQNGASRSSK) form a coiled coil. Disordered regions lie at residues 168–188 (KDAHVKSRTAPHCMESSKSGM) and 249–277 (PKYGSDDECSSGTSGSADSNGNQSFGAGG). The residue at position 253 (Ser253) is a Phosphoserine. The span at 258–273 (SSGTSGSADSNGNQSF) shows a compositional bias: polar residues. The stretch at 282 to 398 (DSQGKLAVIL…KLELHQQEQQ (117 aa)) forms a coiled coil. The next 2 membrane-spanning stretches (helical) occupy residues 417–437 (VILAFMTVILVCVSTIAKFVS) and 450–470 (FFAVTLLAIFCKNWDHILCAI).

It belongs to the TEX28 family. May form homodimers and heterodimers with TMCC2 or TMCC3 via the coiled-coil domains. Interacts with ribosomal proteins RPL4 and RPS6. Widely expressed, with highest levels in brain, spinal cord and testis.

It localises to the endoplasmic reticulum membrane. The polypeptide is Transmembrane and coiled-coil domain protein 3 (Homo sapiens (Human)).